The primary structure comprises 915 residues: Kinesin-like protein KIN-10A (915 aa).

Over residues 1–16 the composition is skewed to pro residues; the sequence is MAPPTPSPRPGPPPTP. Disordered regions lie at residues 1–28 and 34–53; these read MAPPTPSPRPGPPPTPQAAMTTPLKTPA and HFPAMTPRNGGGGGAAAGGT. Residues 56-391 enclose the Kinesin motor domain; it reads PVEVIGRIRN…LEYGAKAKCI (336 aa). 137–144 is an ATP binding site; sequence GPTGSGKS. A coiled-coil region spans residues 426 to 517; that stretch reads NLQKENKLRE…QRLKEVEREK (92 aa). The tract at residues 676–718 is disordered; sequence PAKKAFGDENNEPAKQTFGDENKQQPAKRVFGDENKDPSAWGA.

Belongs to the TRAFAC class myosin-kinesin ATPase superfamily. Kinesin family. KIN-10 subfamily.

This chain is Kinesin-like protein KIN-10A, found in Oryza sativa subsp. japonica (Rice).